The sequence spans 229 residues: MTKKKALNPLPYLASIVFLPWGISLSFNKSMEPWVTNWWNTSQSETFLNDIQEKNILEGFIKLEELFLLDEMIKEYPETHIQKLRIGIHKETIQLVRMHNQDHIHIILHFSTNITCFAILSAYSILGNEELITLNSWVQEFLYNLSDTIKAFSILLLTDLCIGFHSPHAWELMIGSFYKDFGFVQNEKIISGLVSTFPVILDTILKYWIFHYLNRVSPSLVVIYHSLNE.

Transmembrane regions (helical) follow at residues Leu-7–Phe-27, Ile-106–Leu-126, and Ile-189–Ile-209.

This sequence belongs to the CemA family.

It localises to the plastid. Its subcellular location is the chloroplast inner membrane. It catalyses the reaction K(+)(in) + H(+)(out) = K(+)(out) + H(+)(in). In terms of biological role, contributes to K(+)/H(+) antiport activity by supporting proton efflux to control proton extrusion and homeostasis in chloroplasts in a light-dependent manner to modulate photosynthesis. Prevents excessive induction of non-photochemical quenching (NPQ) under continuous-light conditions. Indirectly promotes efficient inorganic carbon uptake into chloroplasts. This Nymphaea alba (White water-lily) protein is Potassium/proton antiporter CemA.